A 221-amino-acid chain; its full sequence is NAD(P)H-hydrate epimerase (221 aa).

Residues M10 to L211 form the YjeF N-terminal domain. Residue N58–D62 participates in (6S)-NADPHX binding. Positions 59 and 121 each coordinate K(+). (6S)-NADPHX-binding positions include G125–P131 and D154. S157 contributes to the K(+) binding site.

Belongs to the NnrE/AIBP family. It depends on K(+) as a cofactor.

It catalyses the reaction (6R)-NADHX = (6S)-NADHX. The enzyme catalyses (6R)-NADPHX = (6S)-NADPHX. In terms of biological role, catalyzes the epimerization of the S- and R-forms of NAD(P)HX, a damaged form of NAD(P)H that is a result of enzymatic or heat-dependent hydration. This is a prerequisite for the S-specific NAD(P)H-hydrate dehydratase to allow the repair of both epimers of NAD(P)HX. This chain is NAD(P)H-hydrate epimerase, found in Weissella koreensis (strain KACC 15510).